We begin with the raw amino-acid sequence, 175 residues long: Dual-action ribosomal maturation protein DarP (175 aa).

The protein belongs to the DarP family.

Its subcellular location is the cytoplasm. Functionally, member of a network of 50S ribosomal subunit biogenesis factors which assembles along the 30S-50S interface, preventing incorrect 23S rRNA structures from forming. Promotes peptidyl transferase center (PTC) maturation. The chain is Dual-action ribosomal maturation protein DarP from Vibrio parahaemolyticus serotype O3:K6 (strain RIMD 2210633).